Consider the following 51-residue polypeptide: Large ribosomal subunit protein eL39 (51 aa).

Residues 32-51 (KGSVKQHPKMRHWRRNTLKK) form a disordered region. Residues 33 to 51 (GSVKQHPKMRHWRRNTLKK) show a composition bias toward basic residues.

The protein belongs to the eukaryotic ribosomal protein eL39 family.

The protein is Large ribosomal subunit protein eL39 of Methanococcus vannielii (strain ATCC 35089 / DSM 1224 / JCM 13029 / OCM 148 / SB).